Here is a 144-residue protein sequence, read N- to C-terminus: Histone H3.1 (144 aa).

Residues 1-45 (MARTKQSARKTTGGKAPRKQLSAKSARKGVSPASSAGAKKSRYRP) are disordered. K5 carries the N6,N6,N6-trimethyllysine; alternate modification. K5 carries the post-translational modification N6,N6-dimethyllysine; alternate. N6-methyllysine; alternate occurs at positions 5 and 10. An N6-acetyllysine; alternate mark is found at K10, K15, K19, K24, K28, and K39. The residue at position 15 (K15) is an N6,N6-dimethyllysine; alternate. An N6-methyllysine; alternate mark is found at K19, K24, K28, and K39. K28 and K39 each carry N6,N6,N6-trimethyllysine; alternate. N6,N6-dimethyllysine; alternate occurs at positions 28 and 39. K58 is subject to N6-acetyllysine.

Belongs to the histone H3 family. In terms of assembly, the nucleosome is a histone octamer containing two molecules each of H2A, H2B, H3 and H4 assembled in one H3-H4 heterotetramer and two H2A-H2B heterodimers. The octamer wraps approximately 147 bp of DNA. Post-translationally, mono-, di- and trimethylated to form H3K4me1/2/3. H3K4me activates gene expression by regulating transcription elongation and plays a role in telomere length maintenance. H3K4me enrichment correlates with transcription levels, and occurs in a 5' to 3' gradient with H3K4me3 enrichment at the 5'-end of genes, shifting to H3K4me2 and then H3K4me1. H3K36me represses gene expression. In terms of processing, acetylation of histone H3 leads to transcriptional activation.

It localises to the nucleus. It is found in the chromosome. Its function is as follows. Core component of nucleosome. Nucleosomes wrap and compact DNA into chromatin, limiting DNA accessibility to the cellular machineries which require DNA as a template. Histones thereby play a central role in transcription regulation, DNA repair, DNA replication and chromosomal stability. DNA accessibility is regulated via a complex set of post-translational modifications of histones, also called histone code, and nucleosome remodeling. The protein is Histone H3.1 (HHT1) of Encephalitozoon cuniculi (strain GB-M1) (Microsporidian parasite).